The sequence spans 66 residues: Pancreatic polypeptide prohormone (66 aa).

Tyrosine 36 is modified (tyrosine amide). Residues 60 to 66 (ELSPMDV) constitute a propeptide that is removed on maturation.

This sequence belongs to the NPY family.

The protein resides in the secreted. Hormone secreted by pancreatic cells that acts as a regulator of pancreatic and gastrointestinal functions probably by signaling through the G protein-coupled receptor NPY4R2. This Felis catus (Cat) protein is Pancreatic polypeptide prohormone (PPY).